The following is a 156-amino-acid chain: Small ribosomal subunit protein uS7 (156 aa).

This sequence belongs to the universal ribosomal protein uS7 family. In terms of assembly, part of the 30S ribosomal subunit. Contacts proteins S9 and S11.

One of the primary rRNA binding proteins, it binds directly to 16S rRNA where it nucleates assembly of the head domain of the 30S subunit. Is located at the subunit interface close to the decoding center, probably blocks exit of the E-site tRNA. The polypeptide is Small ribosomal subunit protein uS7 (Xanthobacter autotrophicus (strain ATCC BAA-1158 / Py2)).